The primary structure comprises 173 residues: Monothiol glutaredoxin-S14, chloroplastic (173 aa).

The transit peptide at 1–63 (MALRSVKTPT…KLKPTKFRCS (63 aa)) directs the protein to the chloroplast. The region spanning 72-173 (KDTLEKLVNS…QEEVEKAMCS (102 aa)) is the Glutaredoxin domain. Glutathione is bound at residue Lys-89. Residues Cys-97 and Phe-99 each coordinate [2Fe-2S] cluster. Cys-97 carries the post-translational modification S-glutathionyl cysteine. Residues 97–100 (CGFS) are required for CAX1 activation. Glutathione is bound by residues Arg-126 and Lys-130. The tract at residues 133-137 (SNWPT) is required for CAX1 activation. Glutathione contacts are provided by residues Phe-138 and 151-152 (CD).

This sequence belongs to the glutaredoxin family. CGFS subfamily. [2Fe-2S]-bridged holo-homodimer. Interacts with N-terminal part of CAX1 in yeast. Interacts in vitro with SUFE1, BOLA1, BOLA2 and BOLA4. Interacts in vivo only with SUFE1, BOLA1 and BOLA4. Interacts with SBP1. As to expression, highly expressed in leaves, at intermediate levels in stems and at lower levels in roots and flowers.

The protein localises to the plastid. It localises to the chloroplast. Its function is as follows. May only reduce GSH-thiol disulfides, but not protein disulfides (Potential). Probably involved in the regulation of the redox state of the BOLA proteins (Potential). May act as Fe-S cluster donors to Fe-S cluster-requiring proteins. May protect cells against protein oxidative damage. May regulate CAX cation transporters. The GRXS14-BOLA1 heterodimer binds a labile, oxygen sensitive Fe-S cluster. The protein is Monothiol glutaredoxin-S14, chloroplastic of Arabidopsis thaliana (Mouse-ear cress).